We begin with the raw amino-acid sequence, 297 residues long: Homoserine kinase (297 aa).

79–89 lines the ATP pocket; that stretch reads PIARGLGSSGA.

This sequence belongs to the GHMP kinase family. Homoserine kinase subfamily.

It localises to the cytoplasm. It catalyses the reaction L-homoserine + ATP = O-phospho-L-homoserine + ADP + H(+). The protein operates within amino-acid biosynthesis; L-threonine biosynthesis; L-threonine from L-aspartate: step 4/5. In terms of biological role, catalyzes the ATP-dependent phosphorylation of L-homoserine to L-homoserine phosphate. In Pyrobaculum neutrophilum (strain DSM 2338 / JCM 9278 / NBRC 100436 / V24Sta) (Thermoproteus neutrophilus), this protein is Homoserine kinase.